Here is a 263-residue protein sequence, read N- to C-terminus: Hatching enzyme 1.2 (263 aa).

Residues 1 to 19 form the signal peptide; the sequence is MDIRASLSILLLLFGLSQA. Residues 20–64 constitute a propeptide, activation peptide; sequence SPLREFEAIFVSEPETVDITTQILETNKGSSEVLFEGDVVLPKNR. Residues 65-263 enclose the Peptidase M12A domain; sequence NALICEDKSC…ILRINKLYGC (199 aa). 3 cysteine pairs are disulfide-bonded: Cys69–Cys74, Cys114–Cys263, and Cys135–Cys155. His163 provides a ligand contact to Zn(2+). Glu164 is an active-site residue. Zn(2+) contacts are provided by His167 and His173.

It depends on Zn(2+) as a cofactor. As to expression, expressed in cells of the hatching gland.

The protein localises to the secreted. The catalysed reaction is Hydrolysis of the inner layer of fish egg envelope. Also hydrolysis of casein and small molecule substrates such as succinyl-Leu-Leu-Val-Tyr-|-7-(4-methyl)coumarylamide.. Metalloendopeptidase which participates in the breakdown of the egg envelope at the time of hatching. Cleaves the N-terminal regions of the zona pellucia glycoproteins ZP2 and ZP3, where it specifically recognizes the peptide sequences TVQQS-|-DYLIK (major site) and KLMLK-|-APEPF (minor site). In Danio rerio (Zebrafish), this protein is Hatching enzyme 1.2.